The sequence spans 639 residues: Putative cyclic beta-1,2-glucan modification protein (639 aa).

Transmembrane regions (helical) follow at residues 34 to 54, 69 to 89, 96 to 116, 144 to 164, 185 to 205, and 227 to 247; these read ALFT…IVRW, PAWT…ALFG, LLIA…QVFL, WTAV…ALLL, FALP…FSWI, and FALA…AGYM.

It is found in the cell membrane. In Rhizobium meliloti (strain 1021) (Ensifer meliloti), this protein is Putative cyclic beta-1,2-glucan modification protein (cgmA).